Reading from the N-terminus, the 207-residue chain is Guanylate kinase (207 aa).

Residues 6–185 enclose the Guanylate kinase-like domain; the sequence is GLLIVLSGPS…AKNRIQSIVE (180 aa). Residue 13 to 20 coordinates ATP; the sequence is GPSGVGKG.

It belongs to the guanylate kinase family.

It localises to the cytoplasm. The catalysed reaction is GMP + ATP = GDP + ADP. Essential for recycling GMP and indirectly, cGMP. This is Guanylate kinase from Staphylococcus epidermidis (strain ATCC 12228 / FDA PCI 1200).